Reading from the N-terminus, the 399-residue chain is Accessory Sec system protein translocase subunit SecY2 (399 aa).

10 helical membrane-spanning segments follow: residues Ile-14 to Gly-34, Leu-60 to Leu-80, Ile-102 to Asn-122, Ser-128 to Ala-148, Ile-152 to Phe-172, Val-184 to Ile-204, Ile-238 to Ala-258, Phe-272 to Leu-292, Trp-335 to Val-355, and Ile-362 to Ile-382.

Belongs to the SecY/SEC61-alpha family. SecY2 subfamily. As to quaternary structure, component of the accessory SecA2/SecY2 protein translocase complex required to export cell wall proteins. May form heterotrimers with SecE and SecG subunits.

The protein localises to the cell membrane. Functionally, part of the accessory SecA2/SecY2 system specifically required for export of possible cell wall proteins. The central subunit of a protein translocation channel. The sequence is that of Accessory Sec system protein translocase subunit SecY2 from Staphylococcus haemolyticus (strain JCSC1435).